The primary structure comprises 284 residues: ATP synthase gamma chain (284 aa).

This sequence belongs to the ATPase gamma chain family. As to quaternary structure, F-type ATPases have 2 components, CF(1) - the catalytic core - and CF(0) - the membrane proton channel. CF(1) has five subunits: alpha(3), beta(3), gamma(1), delta(1), epsilon(1). CF(0) has three main subunits: a, b and c.

Its subcellular location is the cell membrane. In terms of biological role, produces ATP from ADP in the presence of a proton gradient across the membrane. The gamma chain is believed to be important in regulating ATPase activity and the flow of protons through the CF(0) complex. In Bacillus licheniformis (strain ATCC 14580 / DSM 13 / JCM 2505 / CCUG 7422 / NBRC 12200 / NCIMB 9375 / NCTC 10341 / NRRL NRS-1264 / Gibson 46), this protein is ATP synthase gamma chain.